The sequence spans 115 residues: uncharacterized protein (115 aa).

Residues 1-115 (MGVEISLDPP…ETVIKLSAAE (115 aa)) enclose the MSP domain.

This is an uncharacterized protein from Caenorhabditis elegans.